The sequence spans 149 residues: D-aminoacyl-tRNA deacylase (149 aa).

The Gly-cisPro motif, important for rejection of L-amino acids signature appears at 137–138 (GP).

Belongs to the DTD family. In terms of assembly, homodimer.

The protein resides in the cytoplasm. It carries out the reaction glycyl-tRNA(Ala) + H2O = tRNA(Ala) + glycine + H(+). The catalysed reaction is a D-aminoacyl-tRNA + H2O = a tRNA + a D-alpha-amino acid + H(+). In terms of biological role, an aminoacyl-tRNA editing enzyme that deacylates mischarged D-aminoacyl-tRNAs. Also deacylates mischarged glycyl-tRNA(Ala), protecting cells against glycine mischarging by AlaRS. Acts via tRNA-based rather than protein-based catalysis; rejects L-amino acids rather than detecting D-amino acids in the active site. By recycling D-aminoacyl-tRNA to D-amino acids and free tRNA molecules, this enzyme counteracts the toxicity associated with the formation of D-aminoacyl-tRNA entities in vivo and helps enforce protein L-homochirality. The polypeptide is D-aminoacyl-tRNA deacylase (Thermosipho africanus (strain TCF52B)).